We begin with the raw amino-acid sequence, 481 residues long: Neuronal acetylcholine receptor subunit eat-2 (481 aa).

Positions 1-19 (MFLLLQILYILLFLNLADT) are cleaved as a signal peptide. Topologically, residues 20–235 (SDDEYRLLKD…MHLKRRTMYY (216 aa)) are extracellular. A glycan (N-linked (GlcNAc...) asparagine) is linked at N93. C147 and C161 form a disulfide bridge. A run of 3 helical transmembrane segments spans residues 236 to 256 (GLNW…GFTM), 264 to 284 (VTLQ…VSEV), and 292 to 312 (IPII…SICV). Topologically, residues 313 to 443 (SLITVNIFYR…WRFMAMVIDR (131 aa)) are cytoplasmic. The disordered stretch occupies residues 356–384 (KPKREKKKEEEEDEESNAGGKEEESELIS). The chain crosses the membrane as a helical span at residues 444–464 (ASLFLFTGLIFGTTFVIFAAC).

Belongs to the ligand-gated ion channel (TC 1.A.9) family. Acetylcholine receptor (TC 1.A.9.1) subfamily. In terms of assembly, neuronal AChR seems to be composed of two different type of subunits: alpha and beta.

It localises to the postsynaptic cell membrane. Its subcellular location is the cell membrane. In terms of biological role, after binding acetylcholine, the AChR responds by an extensive change in conformation that affects all subunits and leads to opening of an ion-conducting channel across the plasma membrane. Nicotinic acetylcholine receptor in the MC pharyngeal motor neuron involved in pharyngeal pumping. Has a role in the determination of life span possibly via calorific restriction which affects growth rate, although this is independent of metabolic activity. The sequence is that of Neuronal acetylcholine receptor subunit eat-2 from Caenorhabditis briggsae.